A 549-amino-acid chain; its full sequence is Cytoplasmic trehalase (549 aa).

Substrate-binding positions include Arg-168, 175 to 176 (WD), Asn-212, 221 to 223 (RSQ), 292 to 294 (RDE), and Gly-324. Residues Asp-326 and Glu-509 each act as proton donor/acceptor in the active site. Position 525 (Glu-525) interacts with substrate.

It belongs to the glycosyl hydrolase 37 family. Monomer.

It localises to the cytoplasm. It carries out the reaction alpha,alpha-trehalose + H2O = alpha-D-glucose + beta-D-glucose. The protein operates within glycan degradation; trehalose degradation; D-glucose from alpha,alpha-trehalose: step 1/1. Hydrolyzes trehalose to glucose. Could be involved, in cells returning to low osmolarity conditions, in the utilization of the accumulated cytoplasmic trehalose, which was synthesized in response to high osmolarity. This chain is Cytoplasmic trehalase, found in Escherichia coli O157:H7.